The following is a 395-amino-acid chain: Protein HIGH CHLOROPHYLL FLUORESCENCE PHENOTYPE 244, chloroplastic (395 aa).

Residues 1–64 (MASLRLPAQL…ERSIVVPVTC (64 aa)) constitute a chloroplast transit peptide.

The protein belongs to the NmrA-type oxidoreductase family. Component of a high molecular weight complex containing OHP1, OHP2 and HCF244, and PSII core proteins D1/D2, HCF136 and HCF173. Interacts with OHP1. Forms a trimeric complex with OHP1 and OHP2 that mutually stabilizes each subunit.

It is found in the plastid. It localises to the chloroplast stroma. The protein localises to the chloroplast thylakoid membrane. In terms of biological role, auxiliary factor required, together with HCF173, for the biogenesis of photosystem II (PSII), especially for the synthesis of the reaction center proteins (e.g. D1), via the regulation of the corresponding mRNA (e.g. psbA) translation initiation (ribosomal loading) and stabilization. Forms a trimeric complex with OHP1 and OHP2 that is required to promote PSII core subunit assembly. The trimeric complex forms a transient PSII reaction center-like complex with PsbA, PsbD, PsbE, PsbF and PsbI subunits in thylakoids for early assembly of PSII as well as PSII repair. The trimeric complex is required for the recruitment of ribosomes to the psbA mRNA during PSII biogenesis and repair. This chain is Protein HIGH CHLOROPHYLL FLUORESCENCE PHENOTYPE 244, chloroplastic, found in Arabidopsis thaliana (Mouse-ear cress).